The following is a 286-amino-acid chain: MIINHNMSAMFSQRTLGHTNLSVQKNIEKLSSGLRINRSGDDASGLAVSEKMRSQIRGLNQASTNAQNGISFIQVAEAFLQETTDVIQRIRELSVQAANGIYSAEDRLYIQVEVSQLVAEVDRIASHAQFNGMNMLTGRFARQGGENTVTASMWFHIGANMDQRTRAYIGTMTAVAMGIRDAGDESVMNIDSPEKANRAIGTLDQAIKRINKQRADLGAYQNRLDHTVAGINVAAENLQAAESRIRDVDMAKEMVDYTKNQILVQSGTAMLAQANQATQSVLSLLR.

This sequence belongs to the bacterial flagellin family. In terms of assembly, the flagellum consists of an outer layer composed of repeating units of FlaA around a core that contains several antigenically related polypeptides. Interacts with FliW; a synthetic peptide of FlaB1 (residues 229-247) partially blocks binding of this protein to FliW.

The protein resides in the periplasmic flagellum. The protein localises to the periplasm. Component of the core of the flagella. The polypeptide is Flagellin FlaB2 (Treponema pallidum (strain Nichols)).